The primary structure comprises 51 residues: Sperm protamine P1 (51 aa).

Belongs to the protamine P1 family. As to expression, testis.

The protein localises to the nucleus. Its subcellular location is the chromosome. Functionally, protamines substitute for histones in the chromatin of sperm during the haploid phase of spermatogenesis. They compact sperm DNA into a highly condensed, stable and inactive complex. This Trachypithecus cristatus (Silvered leaf-monkey) protein is Sperm protamine P1 (PRM1).